We begin with the raw amino-acid sequence, 309 residues long: Taste receptor type 2 member 31 (309 aa).

The Extracellular segment spans residues 1 to 2 (MT). A helical membrane pass occupies residues 3–23 (TFIPIIFSSLVVVIFVIGNFA). Residues 24-55 (NGFIALVNSIEWFKRQKISFADQILTALAVSR) lie on the Cytoplasmic side of the membrane. The helical transmembrane segment at 56–76 (VGLLWVLLLNWYSTVLNPAFY) threads the bilayer. At 77-100 (SVEVRTTAYNVWAVTGHFSNWLAT) the chain is on the extracellular side. The helical transmembrane segment at 101–121 (SLSIFYLLKIANFSNLIFLHL) threads the bilayer. Topologically, residues 122-126 (KRRVK) are cytoplasmic. Residues 127-147 (SVILVMLLGPLLFLACQLFMI) traverse the membrane as a helical segment. Over 148 to 181 (NMKEIVRTKEYEGNMTWKIKLRSAVYLSDATVTT) the chain is Extracellular. N-linked (GlcNAc...) asparagine glycosylation occurs at Asn-161. The helical transmembrane segment at 182-202 (LGNLVPFTLTLLCFLLLICSL) threads the bilayer. The Cytoplasmic portion of the chain corresponds to 203–229 (CKHLKKMQLHGKGSQDPSTKVHIKVLQ). A helical transmembrane segment spans residues 230-250 (TVISFLLLCAIYFLSIMISVW). Over 251–259 (SFGSLKNKP) the chain is Extracellular. The helical transmembrane segment at 260–280 (VFMFCKAMRFSYPSIHPFILI) threads the bilayer. At 281 to 309 (WGNKKLKQTFLSVLRQVRYWVKGEKPSSP) the chain is on the cytoplasmic side.

This sequence belongs to the G-protein coupled receptor T2R family.

The protein localises to the membrane. Functionally, receptor that may play a role in the perception of bitterness and is gustducin-linked. May play a role in sensing the chemical composition of the gastrointestinal content. The activity of this receptor may stimulate alpha gustducin, mediate PLC-beta-2 activation and lead to the gating of TRPM5. In Pan troglodytes (Chimpanzee), this protein is Taste receptor type 2 member 31 (TAS2R31).